A 181-amino-acid chain; its full sequence is Protein Syd (181 aa).

Belongs to the Syd family.

The protein resides in the cell inner membrane. Functionally, interacts with the SecY protein in vivo. May bind preferentially to an uncomplexed state of SecY, thus functioning either as a chelating agent for excess SecY in the cell or as a regulatory factor that negatively controls the translocase function. In Enterobacter sp. (strain 638), this protein is Protein Syd.